The following is a 439-amino-acid chain: Xaa-Pro dipeptidase (439 aa).

Residues Asp-244, Asp-255, His-335, Glu-380, and Glu-419 each coordinate Mn(2+).

Belongs to the peptidase M24B family. Bacterial-type prolidase subfamily. Requires Mn(2+) as cofactor.

The enzyme catalyses Xaa-L-Pro dipeptide + H2O = an L-alpha-amino acid + L-proline. Functionally, splits dipeptides with a prolyl residue in the C-terminal position. The sequence is that of Xaa-Pro dipeptidase from Shewanella woodyi (strain ATCC 51908 / MS32).